The sequence spans 342 residues: Anthranilate phosphoribosyltransferase (342 aa).

Residues glycine 83, 86–87 (GD), threonine 91, 93–96 (NIST), 111–119 (KHGGRSVSS), and alanine 123 each bind 5-phospho-alpha-D-ribose 1-diphosphate. Residue glycine 83 participates in anthranilate binding. Position 95 (serine 95) interacts with Mg(2+). Anthranilate is bound at residue arginine 169. The Mg(2+) site is built by aspartate 228 and glutamate 229.

The protein belongs to the anthranilate phosphoribosyltransferase family. In terms of assembly, homodimer. Mg(2+) serves as cofactor.

It carries out the reaction N-(5-phospho-beta-D-ribosyl)anthranilate + diphosphate = 5-phospho-alpha-D-ribose 1-diphosphate + anthranilate. Its pathway is amino-acid biosynthesis; L-tryptophan biosynthesis; L-tryptophan from chorismate: step 2/5. Functionally, catalyzes the transfer of the phosphoribosyl group of 5-phosphorylribose-1-pyrophosphate (PRPP) to anthranilate to yield N-(5'-phosphoribosyl)-anthranilate (PRA). This is Anthranilate phosphoribosyltransferase from Neisseria gonorrhoeae (strain ATCC 700825 / FA 1090).